A 197-amino-acid chain; its full sequence is ATP-dependent Clp protease proteolytic subunit 1 (197 aa).

The active-site Nucleophile is Ser-96. His-121 is a catalytic residue.

Belongs to the peptidase S14 family. In terms of assembly, fourteen ClpP subunits assemble into 2 heptameric rings which stack back to back to give a disk-like structure with a central cavity, resembling the structure of eukaryotic proteasomes.

The protein resides in the cytoplasm. It catalyses the reaction Hydrolysis of proteins to small peptides in the presence of ATP and magnesium. alpha-casein is the usual test substrate. In the absence of ATP, only oligopeptides shorter than five residues are hydrolyzed (such as succinyl-Leu-Tyr-|-NHMec, and Leu-Tyr-Leu-|-Tyr-Trp, in which cleavage of the -Tyr-|-Leu- and -Tyr-|-Trp bonds also occurs).. Functionally, cleaves peptides in various proteins in a process that requires ATP hydrolysis. Has a chymotrypsin-like activity. Plays a major role in the degradation of misfolded proteins. The chain is ATP-dependent Clp protease proteolytic subunit 1 from Synechococcus sp. (strain CC9902).